Consider the following 520-residue polypeptide: Putative lipase ATG15 (520 aa).

Topologically, residues 1-14 are cytoplasmic; sequence MLHKSPSRKRFASP. Residues 15 to 35 traverse the membrane as a helical; Signal-anchor for type II membrane protein segment; it reads LHLGCILTLTVLCLIAYYFAL. The Lumenal portion of the chain corresponds to 36-520; it reads PDYLSVGKSS…WLGFCTKYEL (485 aa). N-linked (GlcNAc...) asparagine glycosylation is found at Asn173, Asn202, and Asn208. Ser332 acts as the Charge relay system in catalysis.

It belongs to the AB hydrolase superfamily. Lipase family. Binds to both phosphatidylinositol (PI) and phosphatidylinositol 3,5-bisphosphate (PIP2).

The protein resides in the endosome. It localises to the multivesicular body membrane. The protein localises to the prevacuolar compartment membrane. It catalyses the reaction a triacylglycerol + H2O = a diacylglycerol + a fatty acid + H(+). In terms of biological role, lipase which is essential for lysis of subvacuolar cytoplasm to vacuole targeted bodies and intravacuolar autophagic bodies. Involved in the lysis of intravacuolar multivesicular body (MVB) vesicles. The intravacuolar membrane disintegration by ATG15 is critical to life span extension. The chain is Putative lipase ATG15 (ATG15) from Saccharomyces cerevisiae (strain YJM789) (Baker's yeast).